A 282-amino-acid polypeptide reads, in one-letter code: Shikimate dehydrogenase (NADP(+)) (282 aa).

Shikimate contacts are provided by residues 16–18 and T63; that span reads SLS. K67 (proton acceptor) is an active-site residue. Positions 88 and 103 each coordinate shikimate. NADP(+) contacts are provided by residues 128–132 and L219; that span reads GAGGA. A shikimate-binding site is contributed by Y221. Position 243 (G243) interacts with NADP(+).

This sequence belongs to the shikimate dehydrogenase family. As to quaternary structure, homodimer.

The catalysed reaction is shikimate + NADP(+) = 3-dehydroshikimate + NADPH + H(+). It participates in metabolic intermediate biosynthesis; chorismate biosynthesis; chorismate from D-erythrose 4-phosphate and phosphoenolpyruvate: step 4/7. In terms of biological role, involved in the biosynthesis of the chorismate, which leads to the biosynthesis of aromatic amino acids. Catalyzes the reversible NADPH linked reduction of 3-dehydroshikimate (DHSA) to yield shikimate (SA). This is Shikimate dehydrogenase (NADP(+)) from Xylella fastidiosa (strain M12).